Here is a 399-residue protein sequence, read N- to C-terminus: 3-sulfinopropanoyl-CoA desulfinase (399 aa).

Residues 121–124, S130, and 153–156 contribute to the FAD site; these read ICIS and YWIT. 244–245 is a binding site for substrate; sequence YN. FAD contacts are provided by residues R273, Q340, S344, 367-371, and Q388; that span reads GGTAQ.

This sequence belongs to the acyl-CoA dehydrogenase family. In terms of assembly, homotrimer or homotetramer. FAD is required as a cofactor.

The enzyme catalyses 3-sulfinopropanoyl-CoA + H2O = propanoyl-CoA + sulfite + H(+). In terms of biological role, catalyzes the conversion 3-sulfinopropanoyl-CoA (3SP-CoA) to propanoyl-CoA by abstraction of sulfite. Does not show dehydrogenase activity. This Variovorax paradoxus protein is 3-sulfinopropanoyl-CoA desulfinase.